A 271-amino-acid chain; its full sequence is MTVHPVRPEFVPDPSLSQTEMEELQRDIAAAARFEDEMDVLPEAITRTGDAPDVDQTTLSTSADDRTEPPFIAGVDQAFVDDKAVSAIVVLQNGEVIERVSAVERTEIPYIPGLLSFREGGAILAAFAELETDPDVVLVDGSGRIHFREAGLATHIGVTLDVPAVGVAKNLLCGTPEQSLDERYPEGTRIPITADDSVETCPDGTVIGHALQTRQYDSPNRHINPLIVSPGHRVSASTAADIVEATADGYKLPEPTRLADSYADEAKATVE.

Residues 46–67 (TRTGDAPDVDQTTLSTSADDRT) form a disordered region. Mg(2+) contacts are provided by D76 and D140.

Belongs to the endonuclease V family. Mg(2+) serves as cofactor.

It is found in the cytoplasm. The enzyme catalyses Endonucleolytic cleavage at apurinic or apyrimidinic sites to products with a 5'-phosphate.. In terms of biological role, DNA repair enzyme involved in the repair of deaminated bases. Selectively cleaves double-stranded DNA at the second phosphodiester bond 3' to a deoxyinosine leaving behind the intact lesion on the nicked DNA. In Haloarcula marismortui (strain ATCC 43049 / DSM 3752 / JCM 8966 / VKM B-1809) (Halobacterium marismortui), this protein is Endonuclease V.